The primary structure comprises 404 residues: G2/mitotic-specific cyclin-B1 (404 aa).

Belongs to the cyclin family. Cyclin AB subfamily. As to quaternary structure, interacts with the CDK1 protein kinase to form a serine/threonine kinase holoenzyme complex also known as maturation promoting factor (MPF). The cyclin subunit imparts substrate specificity to the complex.

In terms of biological role, essential for the control of the cell cycle at the G2/M (mitosis) transition. The polypeptide is G2/mitotic-specific cyclin-B1 (ccnb1) (Oryzias latipes (Japanese rice fish)).